A 486-amino-acid polypeptide reads, in one-letter code: Fructose dehydrogenase cytochrome subunit (486 aa).

The N-terminal stretch at 1–25 (MRYFRPLSATAMTTVLLLAGTNVRA) is a signal peptide. Cytochrome c domains follow at residues 38–142 (PSIS…MTEV), 186–294 (DDWN…RSVP), and 330–423 (TKTT…LSHF). Residues cysteine 52, cysteine 55, histidine 56, cysteine 201, cysteine 204, histidine 205, cysteine 343, cysteine 346, and histidine 347 each coordinate heme c. A helical transmembrane segment spans residues 458-478 (LLGTGGILGAILVVAGLWWLI).

As to quaternary structure, heterotrimer composed of FdhL, FdhS and FdhC. Binds 3 heme c groups covalently per subunit.

It is found in the cell membrane. Its function is as follows. Cytochrome subunit of fructose dehydrogenase, an enzyme that catalyzes the oxidation of D-fructose to produce 5-keto-D-fructose. In the complex, mediates both the electron transfer to ubiquinone and the anchoring of the complex to the membrane. This Gluconobacter japonicus protein is Fructose dehydrogenase cytochrome subunit (fdhC).